Reading from the N-terminus, the 249-residue chain is 5'-nucleotidase SurE (249 aa).

A divalent metal cation contacts are provided by Asp8, Asp9, Ser39, and Asn91.

Belongs to the SurE nucleotidase family. A divalent metal cation serves as cofactor.

Its subcellular location is the cytoplasm. It carries out the reaction a ribonucleoside 5'-phosphate + H2O = a ribonucleoside + phosphate. Its function is as follows. Nucleotidase that shows phosphatase activity on nucleoside 5'-monophosphates. The protein is 5'-nucleotidase SurE of Pseudomonas savastanoi pv. phaseolicola (strain 1448A / Race 6) (Pseudomonas syringae pv. phaseolicola (strain 1448A / Race 6)).